Here is a 371-residue protein sequence, read N- to C-terminus: Heterodimeric geranylgeranyl pyrophosphate synthase large subunit 1, chloroplastic (371 aa).

Residues 1–51 (MASVTLGSWIVVHHHNHHHPSSILTKSRSRSCPITLTKPISFRSKRTVSSS) constitute a chloroplast transit peptide. Position 52 is an N-acetylserine (Ser-52). Isopentenyl diphosphate-binding residues include Lys-116, Arg-119, and His-148. Positions 155 and 161 each coordinate Mg(2+). Residue Arg-166 participates in dimethylallyl diphosphate binding. Arg-167 lines the isopentenyl diphosphate pocket. Dimethylallyl diphosphate is bound by residues Lys-256, Thr-257, Gln-294, Lys-311, and Lys-321.

The protein belongs to the FPP/GGPP synthase family. Forms homodimers. Part of a heterodimeric geranyl(geranyl)diphosphate synthase. Interacts with GGR. Requires Mg(2+) as cofactor. Expressed ubiquitously.

It is found in the plastid. It localises to the chloroplast. The protein localises to the cytoplasm. The catalysed reaction is isopentenyl diphosphate + dimethylallyl diphosphate = (2E)-geranyl diphosphate + diphosphate. The enzyme catalyses isopentenyl diphosphate + (2E)-geranyl diphosphate = (2E,6E)-farnesyl diphosphate + diphosphate. It catalyses the reaction isopentenyl diphosphate + (2E,6E)-farnesyl diphosphate = (2E,6E,10E)-geranylgeranyl diphosphate + diphosphate. It participates in isoprenoid biosynthesis; farnesyl diphosphate biosynthesis; farnesyl diphosphate from geranyl diphosphate and isopentenyl diphosphate: step 1/1. It functions in the pathway isoprenoid biosynthesis; geranyl diphosphate biosynthesis; geranyl diphosphate from dimethylallyl diphosphate and isopentenyl diphosphate: step 1/1. Its pathway is isoprenoid biosynthesis; geranylgeranyl diphosphate biosynthesis; geranylgeranyl diphosphate from farnesyl diphosphate and isopentenyl diphosphate: step 1/1. Functionally, heterodimeric geranyl(geranyl)-diphosphate (GPP) synthase large subunit. In vitro, the large subunit catalyzes mainly the trans-addition of the three molecules of IPP onto DMAPP to form geranylgeranyl pyrophosphate while the small subunit alone is inactive. Upon association of the two subunits, the product profile changes and the production of gerany-diphosphate is strongly increased. This Arabidopsis thaliana (Mouse-ear cress) protein is Heterodimeric geranylgeranyl pyrophosphate synthase large subunit 1, chloroplastic (GGPPS1).